The sequence spans 336 residues: Dihydroorotate dehydrogenase (quinone) (336 aa).

FMN contacts are provided by residues 62-66 (AGLDK) and T86. K66 contacts substrate. Residue 111-115 (NRMGF) coordinates substrate. FMN is bound by residues N139 and N172. N172 contributes to the substrate binding site. Catalysis depends on S175, which acts as the Nucleophile. Substrate is bound at residue N177. Residues K217 and T245 each contribute to the FMN site. A substrate-binding site is contributed by 246–247 (NT). FMN-binding positions include G268, G297, and 318-319 (YS).

This sequence belongs to the dihydroorotate dehydrogenase family. Type 2 subfamily. In terms of assembly, monomer. The cofactor is FMN.

It is found in the cell membrane. It carries out the reaction (S)-dihydroorotate + a quinone = orotate + a quinol. Its pathway is pyrimidine metabolism; UMP biosynthesis via de novo pathway; orotate from (S)-dihydroorotate (quinone route): step 1/1. Functionally, catalyzes the conversion of dihydroorotate to orotate with quinone as electron acceptor. In Escherichia coli O17:K52:H18 (strain UMN026 / ExPEC), this protein is Dihydroorotate dehydrogenase (quinone).